Consider the following 151-residue polypeptide: MVVRRRKKSRHLRGRTRTMGWGRIGQHRGSGSRGGFGAAGMHKHMWTWVVKYAPTWFGKHGFNRPQIYELKASEINVGELAEKLDAWLREGVAKQEEGKIVVNLAELGYAKLLGRGKITRPVKVIVPAATERAVKKIEEAGGEVVILKQQG.

It belongs to the universal ribosomal protein uL15 family. As to quaternary structure, part of the 50S ribosomal subunit.

In terms of biological role, binds to the 23S rRNA. The polypeptide is Large ribosomal subunit protein uL15 (Hyperthermus butylicus (strain DSM 5456 / JCM 9403 / PLM1-5)).